Consider the following 452-residue polypeptide: Cytochrome b-c1 complex subunit 2, mitochondrial (452 aa).

A mitochondrion-targeting transit peptide spans 1 to 14; that stretch reads MKLLSRAGSFSRFY. N6-acetyllysine occurs at positions 65, 198, and 249. A Phosphoserine modification is found at Ser367.

This sequence belongs to the peptidase M16 family. UQCRC2/QCR2 subfamily. Component of the ubiquinol-cytochrome c oxidoreductase (cytochrome b-c1 complex, complex III, CIII), a multisubunit enzyme composed of 11 subunits. The complex is composed of 3 respiratory subunits cytochrome b, cytochrome c1 and Rieske protein UQCRFS1, 2 core protein subunits UQCRC1/QCR1 and UQCRC2/QCR2, and 6 low-molecular weight protein subunits UQCRH/QCR6, UQCRB/QCR7, UQCRQ/QCR8, UQCR10/QCR9, UQCR11/QCR10 and subunit 9, the cleavage product of Rieske protein UQCRFS1. The complex exists as an obligatory dimer and forms supercomplexes (SCs) in the inner mitochondrial membrane with NADH-ubiquinone oxidoreductase (complex I, CI) and cytochrome c oxidase (complex IV, CIV), resulting in different assemblies (supercomplex SCI(1)III(2)IV(1) and megacomplex MCI(2)III(2)IV(2)). Interacts with RAB5IF. Interacts with STMP1. As to expression, expressed in the head region and flagellum of epididymal sperm.

It is found in the mitochondrion inner membrane. Functionally, component of the ubiquinol-cytochrome c oxidoreductase, a multisubunit transmembrane complex that is part of the mitochondrial electron transport chain which drives oxidative phosphorylation. The respiratory chain contains 3 multisubunit complexes succinate dehydrogenase (complex II, CII), ubiquinol-cytochrome c oxidoreductase (cytochrome b-c1 complex, complex III, CIII) and cytochrome c oxidase (complex IV, CIV), that cooperate to transfer electrons derived from NADH and succinate to molecular oxygen, creating an electrochemical gradient over the inner membrane that drives transmembrane transport and the ATP synthase. The cytochrome b-c1 complex catalyzes electron transfer from ubiquinol to cytochrome c, linking this redox reaction to translocation of protons across the mitochondrial inner membrane, with protons being carried across the membrane as hydrogens on the quinol. In the process called Q cycle, 2 protons are consumed from the matrix, 4 protons are released into the intermembrane space and 2 electrons are passed to cytochrome c. The 2 core subunits UQCRC1/QCR1 and UQCRC2/QCR2 are homologous to the 2 mitochondrial-processing peptidase (MPP) subunits beta-MPP and alpha-MPP respectively, and they seem to have preserved their MPP processing properties. May be involved in the in situ processing of UQCRFS1 into the mature Rieske protein and its mitochondrial targeting sequence (MTS)/subunit 9 when incorporated into complex III. This chain is Cytochrome b-c1 complex subunit 2, mitochondrial (Uqcrc2), found in Rattus norvegicus (Rat).